Reading from the N-terminus, the 254-residue chain is 3-dehydroquinate dehydratase (254 aa).

3-dehydroquinate contacts are provided by residues 47–49 (EWR) and Arg-83. Catalysis depends on His-144, which acts as the Proton donor/acceptor. Lys-171 functions as the Schiff-base intermediate with substrate in the catalytic mechanism. 3 residues coordinate 3-dehydroquinate: Arg-214, Ser-233, and Gln-237.

It belongs to the type-I 3-dehydroquinase family. As to quaternary structure, homodimer.

The catalysed reaction is 3-dehydroquinate = 3-dehydroshikimate + H2O. Its pathway is metabolic intermediate biosynthesis; chorismate biosynthesis; chorismate from D-erythrose 4-phosphate and phosphoenolpyruvate: step 3/7. Involved in the third step of the chorismate pathway, which leads to the biosynthesis of aromatic amino acids. Catalyzes the cis-dehydration of 3-dehydroquinate (DHQ) and introduces the first double bond of the aromatic ring to yield 3-dehydroshikimate. In Bacillus licheniformis (strain ATCC 14580 / DSM 13 / JCM 2505 / CCUG 7422 / NBRC 12200 / NCIMB 9375 / NCTC 10341 / NRRL NRS-1264 / Gibson 46), this protein is 3-dehydroquinate dehydratase.